A 470-amino-acid polypeptide reads, in one-letter code: Poly(A) polymerase catalytic subunit (470 aa).

Catalysis depends on residues D192 and D194.

This sequence belongs to the poxviridae poly(A) polymerase catalytic subunit family. Heterodimer of a large (catalytic) subunit and a small (regulatory) subunit.

The catalysed reaction is RNA(n) + ATP = RNA(n)-3'-adenine ribonucleotide + diphosphate. Functionally, polymerase that creates the 3'-poly(A) tail of mRNA's. The protein is Poly(A) polymerase catalytic subunit (PAPL) of Molluscum contagiosum virus subtype 1 (MOCV).